The chain runs to 105 residues: Thioredoxin (105 aa).

The Thioredoxin domain maps to 1–105 (MANNVMDSSF…SLLDWINKSI (105 aa)). C30 and C33 form a disulfide bridge.

This sequence belongs to the thioredoxin family.

In terms of biological role, component of the thioredoxin-thioredoxin reductase system. Participates in various redox reactions through the reversible oxidation of its active center dithiol to a disulfide and catalyzes dithiol-disulfide exchange reactions. This Rickettsia conorii (strain ATCC VR-613 / Malish 7) protein is Thioredoxin (trxA).